A 260-amino-acid polypeptide reads, in one-letter code: 2-oxo-tetronate isomerase (260 aa).

E143 acts as the Proton donor/acceptor in catalysis. Residues E143, D178, Q204, and E240 each coordinate Mg(2+). The active-site Proton donor/acceptor is E240.

The protein belongs to the hyi family. OtnI subfamily.

It carries out the reaction 2-dehydro-L-erythronate = 3-dehydro-L-erythronate. The catalysed reaction is 2-dehydro-D-erythronate = 3-dehydro-D-erythronate. In terms of biological role, catalyzes the isomerization of 2-oxo-tetronate to 3-oxo-tetronate. The sequence is that of 2-oxo-tetronate isomerase from Cupriavidus necator (strain ATCC 17699 / DSM 428 / KCTC 22496 / NCIMB 10442 / H16 / Stanier 337) (Ralstonia eutropha).